The sequence spans 144 residues: Complexin-1 (144 aa).

Residues 1–10 (MVSFLGGGLL) are compositionally biased toward gly residues. The segment at 1–119 (MVSFLGGGLL…SGFPKNLDDL (119 aa)) is disordered. Composition is skewed to basic and acidic residues over residues 18–27 (LEEKEDKKEG) and 36–86 (AEAK…EGRL). Residues 29-67 (EEEDPEIAEAKREAEEKRNEKYRKMEEEREVMRQGIRDK) adopt a coiled-coil conformation. Positions 103–112 (LQSSAQSSGF) are enriched in polar residues. Cys-141 is subject to Cysteine methyl ester. The S-farnesyl cysteine moiety is linked to residue Cys-141. The propeptide at 142–144 (NLQ) is removed in mature form.

Belongs to the complexin/synaphin family. As to quaternary structure, binds to the SNARE core complex containing SNAP25, synaptobrevin and syntaxin-1. As to expression, expressed in a subset of neurons in the central nervous system, including large serotoninergic Retzius neurons and pressure-sensitive P cells.

It is found in the membrane. Its function is as follows. Positively regulates a late step in synaptic vesicle exocytosis. This chain is Complexin-1 (cpx1), found in Hirudo medicinalis (Medicinal leech).